Consider the following 211-residue polypeptide: Large ribosomal subunit protein uL3 (211 aa).

N5-methylglutamine is present on Gln150.

This sequence belongs to the universal ribosomal protein uL3 family. In terms of assembly, part of the 50S ribosomal subunit. Forms a cluster with proteins L14 and L19. In terms of processing, methylated by PrmB.

Functionally, one of the primary rRNA binding proteins, it binds directly near the 3'-end of the 23S rRNA, where it nucleates assembly of the 50S subunit. The polypeptide is Large ribosomal subunit protein uL3 (Pseudomonas entomophila (strain L48)).